Consider the following 61-residue polypeptide: Alpha-conotoxin PnIB (61 aa).

Residues 1–21 form the signal peptide; that stretch reads MGMRMMFTVFLLVVLATTVVS. Positions 22-44 are excised as a propeptide; that stretch reads FTSDRASDDGNAAASDLIALTIK. 2 cysteine pairs are disulfide-bonded: cysteine 46-cysteine 52 and cysteine 47-cysteine 60. Positions 48–50 are ser-Xaa-Pro motif, crucial for potent interaction with nAChR; it reads SLP. Tyrosine 59 is modified (sulfotyrosine). A Cysteine amide modification is found at cysteine 60.

It belongs to the conotoxin A superfamily. As to expression, expressed by the venom duct.

The protein localises to the secreted. Its function is as follows. Alpha-conotoxins act on postsynaptic membranes, they bind to the nicotinic acetylcholine receptors (nAChR) and thus inhibit them. This toxin blocks mammalian nAChRs (alpha-7/CHRNA7 &gt; alpha-3-beta-2/CHRNA3-CHRNB2). This Conus pennaceus (Feathered cone) protein is Alpha-conotoxin PnIB.